We begin with the raw amino-acid sequence, 311 residues long: 4-diphosphocytidyl-2-C-methyl-D-erythritol kinase (311 aa).

Lysine 16 is an active-site residue. 101-111 (PVAGGMAGGSA) contributes to the ATP binding site. Aspartate 143 is an active-site residue.

Belongs to the GHMP kinase family. IspE subfamily.

It catalyses the reaction 4-CDP-2-C-methyl-D-erythritol + ATP = 4-CDP-2-C-methyl-D-erythritol 2-phosphate + ADP + H(+). It functions in the pathway isoprenoid biosynthesis; isopentenyl diphosphate biosynthesis via DXP pathway; isopentenyl diphosphate from 1-deoxy-D-xylulose 5-phosphate: step 3/6. Its function is as follows. Catalyzes the phosphorylation of the position 2 hydroxy group of 4-diphosphocytidyl-2C-methyl-D-erythritol. This Rhodococcus jostii (strain RHA1) protein is 4-diphosphocytidyl-2-C-methyl-D-erythritol kinase.